The sequence spans 701 residues: Elongation factor G (701 aa).

The tr-type G domain occupies 11–287; it reads NKVRNIGIMA…AVVDYLPSPL (277 aa). GTP-binding positions include 20-27, 84-88, and 138-141; these read AHIDAGKT, DTPGH, and NKMD.

The protein belongs to the TRAFAC class translation factor GTPase superfamily. Classic translation factor GTPase family. EF-G/EF-2 subfamily.

It is found in the cytoplasm. In terms of biological role, catalyzes the GTP-dependent ribosomal translocation step during translation elongation. During this step, the ribosome changes from the pre-translocational (PRE) to the post-translocational (POST) state as the newly formed A-site-bound peptidyl-tRNA and P-site-bound deacylated tRNA move to the P and E sites, respectively. Catalyzes the coordinated movement of the two tRNA molecules, the mRNA and conformational changes in the ribosome. The protein is Elongation factor G of Mycobacterium sp. (strain JLS).